The sequence spans 224 residues: Transcriptional regulatory protein TctD (224 aa).

The 115-residue stretch at Arg-2–Leu-116 folds into the Response regulatory domain. Asp-51 bears the 4-aspartylphosphate mark. Residues Gly-121 to Arg-219 constitute a DNA-binding region (ompR/PhoB-type).

Functionally, transcriptional activator of the tctI tricarboxylate transport system operon. The polypeptide is Transcriptional regulatory protein TctD (tctD) (Salmonella typhimurium (strain SL1344)).